The sequence spans 2094 residues: Nuclear mitotic apparatus protein 1 (2094 aa).

Residues 1–210 (MTLHATRAAT…SPMGDILQTP (210 aa)) form a head (Globular) region. A Phosphoserine modification is found at Ser-160. Phosphothreonine is present on Thr-161. Phosphoserine occurs at positions 167 and 201. At Thr-209 the chain carries Phosphothreonine. Residues 211–1681 (QFQMRRLKKQ…ADQQLRDLGK (1471 aa)) adopt a coiled-coil conformation. Ser-269 is modified (phosphoserine). At Lys-377 the chain carries N6-acetyllysine. Phosphoserine is present on residues Ser-386 and Ser-398. Lys-443 carries the N6-acetyllysine modification. 2 disordered regions span residues 617–636 (QLQAANDARDNAQTSVTQAQ) and 723–759 (LKEQQCRATEMEAESRSLMEQREREQKELEQEKAGRK). Polar residues predominate over residues 627-636 (NAQTSVTQAQ). At Lys-878 the chain carries N6-acetyllysine. Disordered regions lie at residues 921–1000 (SLEL…TQER), 1081–1143 (LVKK…EGLT), and 1173–1223 (ELGH…SSLI). The span at 935–951 (ASDQLGEQQGRPFSSTH) shows a compositional bias: polar residues. Composition is skewed to basic and acidic residues over residues 956 to 972 (AMEREAEQMGGELERLR) and 983 to 998 (QEERGQQEREVARLTQ). The residue at position 1183 (Ser-1183) is a Phosphoserine. Basic and acidic residues predominate over residues 1194–1206 (KAQDHSKAEEEWK). Ser-1221 is subject to Phosphoserine. N6-acetyllysine is present on Lys-1507. The residue at position 1583 (Ser-1583) is a Phosphoserine. Residue Lys-1681 forms a Glycyl lysine isopeptide (Lys-Gly) (interchain with G-Cter in SUMO2) linkage. Residues 1681 to 1858 (KFQVATDALK…NSALLSLPGY (178 aa)) are membrane-binding domain 1. The tract at residues 1682–2094 (FQVATDALKS…TPRAKGKVKH (413 aa)) is tail (Globular). A phosphoserine mark is found at Ser-1703, Ser-1706, and Ser-1710. A disordered region spans residues 1718 to 1743 (SVASKLPRTQPDGTSVPGEPASPISQ). Positions 1724-1730 (PRTQPDG) match the Tankyrase-binding domain motif. Phosphoserine is present on residues Ser-1739 and Ser-1742. Residue Lys-1748 forms a Glycyl lysine isopeptide (Lys-Gly) (interchain with G-Cter in SUMO1); alternate linkage. Lys-1748 is covalently cross-linked (Glycyl lysine isopeptide (Lys-Gly) (interchain with G-Cter in SUMO2); alternate). Ser-1751 carries the post-translational modification Phosphoserine. Ser-1754 is subject to Phosphoserine; by PLK1. Tyr-1756 is modified (phosphotyrosine). Thr-1758 is subject to Phosphothreonine. The interval 1760-1795 (TPARGQAPLETSLDSLGDAFPDSGRKTRSARRRTTQ) is disordered. Residues 1770-1792 (TSLDSLGDAFPDSGRKTRSARRR) form a 4.1-binding domain region. The residue at position 1771 (Ser-1771) is a Phosphoserine; by PLK1. Phosphoserine is present on residues Ser-1774 and Ser-1782. Thr-1786 is subject to Phosphothreonine. A Glycyl lysine isopeptide (Lys-Gly) (interchain with G-Cter in SUMO2) cross-link involves residue Lys-1804. 2 disordered regions span residues 1807–1883 (LEEP…GRNS) and 1937–2094 (EMKT…KVKH). Phosphoserine occurs at positions 1812 and 1815. Polar residues predominate over residues 1812-1839 (SANSSFYSTQSAPASQANLRATSSTQSL). At Ser-1816 the chain carries Phosphoserine; by PLK1. Tyr-1818 is subject to Phosphotyrosine. Ser-1822 carries the post-translational modification Phosphoserine. Ser-1826 is modified (phosphoserine; alternate). Ser-1826 carries an O-linked (GlcNAc) serine; alternate glycan. Ser-1844 and Ser-1869 each carry phosphoserine. A tubulin-binding domain region spans residues 1864–1967 (SSARRSQARM…AEGVGITTRQ (104 aa)). The tract at residues 1874 to 1908 (SSGAPQGRNSFYMGTCQDEPEQLDDWNRIAELQQR) is GPSM2-binding domain. The span at 1937–1948 (EMKTGDPRETLR) shows a compositional bias: basic and acidic residues. Residue Ser-1951 is modified to Phosphoserine. A membrane-binding domain 2 region spans residues 1963–2042 (ITTRQQRKRV…SILNTPKKLG (80 aa)). Positions 1966 to 1971 (RQQRKR) match the Nuclear localization signal motif. Residues Ser-1973 and Ser-1974 each carry the phosphoserine modification. At Thr-1982 the chain carries Phosphothreonine. Ser-1985 is subject to Phosphoserine. Thr-1997 carries the phosphothreonine; by CDK1 modification. The segment covering 1997-2006 (TPRDRHEGRK) has biased composition (basic and acidic residues). Ser-2029 carries the post-translational modification Phosphoserine. Thr-2037 is subject to Phosphothreonine. 2 positions are modified to phosphoserine: Ser-2044 and Ser-2059. Ser-2069 carries the phosphoserine; by CDK1 modification. Residues 2073–2085 (ATTTTGTATVATT) show a composition bias toward low complexity. A Phosphothreonine; by CDK1 modification is found at Thr-2085.

In terms of assembly, homodimer. Also forms multiarm oligomers by association of C-terminal tail domains, oligomers may further assemble to form a hexagonal nuclear lattice-like network. Associates with the dynein-dynactin complex; this association promotes the transport and accumulation of NUMA1 at the mitotic spindle poles that is inhibited by the BRISC complex in a PLK1-dependent manner. Part of a spindle orientation complex at least composed of GNAI1, GPSM2 and NUMA1. Interacts (via C-terminus) with microtubules (MTs); this interaction is direct and promotes both MT bundle formation and stability in a dynein-dynactin complex- and CDK1-independent manner. Interacts with EPB41 and EPB41L2; these interactions are negatively regulated by CDK1 during metaphase and are important for anaphase-specific localization of NUMA1 in symmetrically dividing cells. Interacts (via C-terminus) with GPSM2 (via TPR repeats); this interaction is direct, prevented by competitive binding of INSC, is inhibited in a PLK1-dependent manner, blocks the association of NUMA1 with MTs and inhibits NUMA1-induced MT bundle formation, prevents the association of NUMA1 with SPAG5, induces mitotic spindle pole localization of GPSM2, both metaphase cell cortex localization of NUMA1 and mitotic spindle organization. Does not interact with GPSM2 during anaphase. Interacts (via C-terminus) with the nuclear importin alpha/importin beta receptor; this interaction is inhibited by RanGTP. Interacts (via C-terminus) with KPNB1; this interaction is inhibited by RanGTP and the BRISC complex. Interacts with ABRAXAS2 and the BRISC complex; these interactions regulate mitotic spindle assembly. Interacts (via N-terminal end of the coiled-coil domain) with RAE1; this interaction promotes mitotic spindle formation. Interacts (via C-terminus) with SPAG5 (via C-terminus); this interaction promotes the recruitment of SPAG5 to the MTs at spindle poles in a dynein-dynactin-dependent manner and regulates mitotic spindle organization and proper chromosome alignment during mitosis. Interacts with TNKS; this interaction occurs at the onset of mitosis. Interacts with TNKS2. Interacts with tubulin. Interacts with KHDC3 (via C-terminus). Phosphorylation and dephosphorylation on Thr-2037 regulates the extent of cortical NUMA1 and the dynein-dynactin complex localization during mitotic metaphase and anaphase. In metaphase, phosphorylation on Thr-2037 occurs in a kinase CDK1-dependent manner; this phosphorylation maintains low levels of cortical dynein-dynactin complex at metaphase, and hence proper spindle positioning. In anaphase, dephosphorylated on Thr-2037 by phosphatase PPP2CA; this dephosphorylation stimulates its membrane association and with the dynein-dynactin complex its enrichment at the cell cortex, and hence robust spindle elongation. Probably also phosphorylated on Thr-1997 and Ser-2069 by CDK1; these phosphorylations may regulate its cell cortex recruitment during metaphase and anaphase. Phosphorylated on Ser-1751, Ser-1754, Ser-1771 and Ser-1816 by PLK1; these phosphorylations induce cortical dynein-dynactin complex dissociation from the NUMA1-GPSM2 complex and negatively regulates cortical dynein-dynactin complex localization. In terms of processing, ADP-ribosylated by TNKS at the onset of mitosis; ADP-ribosylation is not required for its localization to spindle poles. Post-translationally, O-glycosylated during cytokinesis at sites identical or close to phosphorylation sites, this interferes with the phosphorylation status. Ubiquitinated with 'Lys-63'-linked polyubiquitin chains. Deubiquitination by the BRISC complex is important for the incorporation of NUMA1 into mitotic spindle poles and normal spindle pole function, probably by modulating interactions between NUMA1, dynein-dynactin complex and importin-beta. As to expression, expressed in testis, speen, liver, lung, spinal cord and brain. Expressed in Purkinje neurons (at protein level).

It localises to the nucleus. The protein resides in the nucleoplasm. The protein localises to the nucleus matrix. Its subcellular location is the chromosome. It is found in the cytoplasm. It localises to the cytoskeleton. The protein resides in the microtubule organizing center. The protein localises to the centrosome. Its subcellular location is the spindle pole. It is found in the cell cortex. It localises to the cell membrane. The protein resides in the lateral cell membrane. Its function is as follows. Microtubule (MT)-binding protein that plays a role in the formation and maintenance of the spindle poles and the alignement and the segregation of chromosomes during mitotic cell division. Functions to tether the minus ends of MTs at the spindle poles, which is critical for the establishment and maintenance of the spindle poles. Plays a role in the establishment of the mitotic spindle orientation during metaphase and elongation during anaphase in a dynein-dynactin-dependent manner. In metaphase, part of a ternary complex composed of GPSM2 and G(i) alpha proteins, that regulates the recruitment and anchorage of the dynein-dynactin complex in the mitotic cell cortex regions situated above the two spindle poles, and hence regulates the correct oritentation of the mitotic spindle. During anaphase, mediates the recruitment and accumulation of the dynein-dynactin complex at the cell membrane of the polar cortical region through direct association with phosphatidylinositol 4,5-bisphosphate (PI(4,5)P2), and hence participates in the regulation of the spindle elongation and chromosome segregation. Also binds to other polyanionic phosphoinositides, such as phosphatidylinositol 3-phosphate (PIP), lysophosphatidic acid (LPA) and phosphatidylinositol triphosphate (PIP3), in vitro. Also required for proper orientation of the mitotic spindle during asymmetric cell divisions. Plays a role in mitotic MT aster assembly. Involved in anastral spindle assembly. Positively regulates TNKS protein localization to spindle poles in mitosis. Highly abundant component of the nuclear matrix where it may serve a non-mitotic structural role, occupies the majority of the nuclear volume. Required for epidermal differentiation and hair follicle morphogenesis. The polypeptide is Nuclear mitotic apparatus protein 1 (Mus musculus (Mouse)).